Here is a 564-residue protein sequence, read N- to C-terminus: 2-succinyl-5-enolpyruvyl-6-hydroxy-3-cyclohexene-1-carboxylate synthase (564 aa).

The protein belongs to the TPP enzyme family. MenD subfamily. Homodimer. Mg(2+) serves as cofactor. The cofactor is Mn(2+). Thiamine diphosphate is required as a cofactor.

It carries out the reaction isochorismate + 2-oxoglutarate + H(+) = 5-enolpyruvoyl-6-hydroxy-2-succinyl-cyclohex-3-ene-1-carboxylate + CO2. Its pathway is quinol/quinone metabolism; 1,4-dihydroxy-2-naphthoate biosynthesis; 1,4-dihydroxy-2-naphthoate from chorismate: step 2/7. It participates in quinol/quinone metabolism; menaquinone biosynthesis. Catalyzes the thiamine diphosphate-dependent decarboxylation of 2-oxoglutarate and the subsequent addition of the resulting succinic semialdehyde-thiamine pyrophosphate anion to isochorismate to yield 2-succinyl-5-enolpyruvyl-6-hydroxy-3-cyclohexene-1-carboxylate (SEPHCHC). The chain is 2-succinyl-5-enolpyruvyl-6-hydroxy-3-cyclohexene-1-carboxylate synthase from Vibrio vulnificus (strain YJ016).